We begin with the raw amino-acid sequence, 765 residues long: Transient receptor potential cation channel subfamily V member 6 (765 aa).

The Cytoplasmic segment spans residues M1–P367. ANK repeat units lie at residues I84 to Q114, M118 to F147, and E156 to A185. Residues E133–P143 are interaction with calmodulin. Phosphotyrosine; by SRC is present on Y201. ANK repeat units follow at residues F202–A231, L235–N277, and Q279–W308. The helical transmembrane segment at Y368–I388 threads the bilayer. Residues Y389–R425 lie on the Extracellular side of the membrane. A glycan (N-linked (GlcNAc...) asparagine) is linked at N398. A helical transmembrane segment spans residues L426–F448. Over R449–G463 the chain is Cytoplasmic. A helical transmembrane segment spans residues P464–R483. Residues L484–G489 are Extracellular-facing. The helical transmembrane segment at E490–A509 threads the bilayer. Residues R510 to D529 lie on the Cytoplasmic side of the membrane. The chain crosses the membrane as a helical span at residues L530–F552. At Q553 to D565 the chain is on the extracellular side. The segment at residues Y566 to A585 is an intramembrane region (pore-forming). The Selectivity filter motif lies at I581–A585. D582 provides a ligand contact to Ca(2+). Residues N586 to S596 are Extracellular-facing. The chain crosses the membrane as a helical span at residues I597–M617. Residues M618–I765 are Cytoplasmic-facing. The segment at V638 to V642 is interaction with S100A10. Positions S731–I751 are interaction with calmodulin. T742 is modified (phosphothreonine; by PKC/PRKCA).

The protein belongs to the transient receptor (TC 1.A.4) family. TrpV subfamily. TRPV6 sub-subfamily. As to quaternary structure, homotetramer. Probably also forms heterotetramers with TRPV5. Interacts with TRPV5. Interacts with S100A10 and probably with the ANAX2-S100A10 heterotetramer. The interaction with S100A10 is required for the trafficking to the plasma membrane. Interacts with BSPRY. Interacts with TCAF1 and TCAF2 isoform 2. Interacts with calmodulin. Glycosylated. In terms of processing, phosphorylation at Tyr-201 by SRC leads to an increased calcium influx through the channel. Probably dephosphorylated at this site by PTPN1. Phosphorylation by PRKCA at the calmodulin binding site delays channel inactivation. As to expression, expressed at high levels in the gastrointestinal tract, including esophagus, stomach, duodenum, jejunum, ileum and colon, and in pancreas, placenta, prostate and salivary gland. Expressed at moderate levels in liver, kidney and testis. Expressed in trophoblasts of placenta villus trees (at protein level). Expressed in locally advanced prostate cancer, metastatic and androgen-insensitive prostatic lesions but not detected in healthy prostate tissue and benign prostatic hyperplasia.

The protein resides in the cell membrane. The catalysed reaction is Ca(2+)(in) = Ca(2+)(out). Calcium selective cation channel that mediates Ca(2+) uptake in various tissues, including the intestine. Important for normal Ca(2+) ion homeostasis in the body, including bone and skin. The channel is activated by low internal calcium level, probably including intracellular calcium store depletion, and the current exhibits an inward rectification. Inactivation includes both a rapid Ca(2+)-dependent and a slower Ca(2+)-calmodulin-dependent mechanism; the latter may be regulated by phosphorylation. In vitro, is slowly inhibited by Mg(2+) in a voltage-independent manner. Heteromeric assembly with TRPV5 seems to modify channel properties. TRPV5-TRPV6 heteromultimeric concatemers exhibit voltage-dependent gating. The chain is Transient receptor potential cation channel subfamily V member 6 (TRPV6) from Homo sapiens (Human).